Reading from the N-terminus, the 1331-residue chain is DNA-directed RNA polymerase subunit beta' (1331 aa).

Residues C60, C62, C75, and C78 each contribute to the Zn(2+) site. 3 residues coordinate Mg(2+): D535, D537, and D539. 4 residues coordinate Zn(2+): C902, C979, C986, and C989.

This sequence belongs to the RNA polymerase beta' chain family. As to quaternary structure, the RNAP catalytic core consists of 2 alpha, 1 beta, 1 beta' and 1 omega subunit. When a sigma factor is associated with the core the holoenzyme is formed, which can initiate transcription. It depends on Mg(2+) as a cofactor. Zn(2+) serves as cofactor.

It carries out the reaction RNA(n) + a ribonucleoside 5'-triphosphate = RNA(n+1) + diphosphate. Its function is as follows. DNA-dependent RNA polymerase catalyzes the transcription of DNA into RNA using the four ribonucleoside triphosphates as substrates. This chain is DNA-directed RNA polymerase subunit beta', found in Corynebacterium aurimucosum (strain ATCC 700975 / DSM 44827 / CIP 107346 / CN-1) (Corynebacterium nigricans).